The sequence spans 357 residues: MEYKRFKTRQIKVGNVSIGGDAPISVQSMLFTKTRDIEGSLEQISRLYFAGANIVRLACLDMADARALKEIKAKSPLPLIVDIHFNHNLAVYCAEFIDGVRINPGNIGSKENIKEVVKACKERGIPIRIGVNHGSIEKQFSDKFGYGVDAMLESAMYNIKLLEDLDFFDIKISMKTSDAQKTIEAYERLRPLCDYPFHLGVTEAGTKFHSTVKSSIALGNLLLKGIGDTMRVSMTGELEEEIRVARAILQDSGVQKSGVNIISCPTCGRIQSDLLSAIKIVEEKTKHIKEPLNISVMGCVVNALGEAKGADVAIAFGKNQGLVIRHGEVVAKLKESELVDRFLAEVEDEVKSRAVKE.

Residues Cys264, Cys267, Cys299, and Glu306 each coordinate [4Fe-4S] cluster.

This sequence belongs to the IspG family. [4Fe-4S] cluster is required as a cofactor.

It carries out the reaction (2E)-4-hydroxy-3-methylbut-2-enyl diphosphate + oxidized [flavodoxin] + H2O + 2 H(+) = 2-C-methyl-D-erythritol 2,4-cyclic diphosphate + reduced [flavodoxin]. It functions in the pathway isoprenoid biosynthesis; isopentenyl diphosphate biosynthesis via DXP pathway; isopentenyl diphosphate from 1-deoxy-D-xylulose 5-phosphate: step 5/6. In terms of biological role, converts 2C-methyl-D-erythritol 2,4-cyclodiphosphate (ME-2,4cPP) into 1-hydroxy-2-methyl-2-(E)-butenyl 4-diphosphate. The protein is 4-hydroxy-3-methylbut-2-en-1-yl diphosphate synthase (flavodoxin) of Campylobacter jejuni subsp. jejuni serotype O:6 (strain 81116 / NCTC 11828).